The sequence spans 686 residues: Myb-related protein B (686 aa).

The disordered stretch occupies residues 1-28 (MARRSRGEDQDELHCQDTDSDVPEQRDG). HTH myb-type domains lie at 26–77 (RDGR…LRVL), 78–133 (NPDL…NPEV), and 134–184 (KKSS…KRKV). 3 consecutive DNA-binding regions (H-T-H motif) follow at residues 54-77 (WKFLASHFPNRSDQQCQYRWLRVL), 106-129 (WTLIAKHLKGRLGKQCRERWHNHL), and 157-180 (WAEIAKLLPGRTDNAVKNHWNSTI). Disordered regions lie at residues 315 to 355 (CDLT…VTEY) and 493 to 512 (YVVDNTPHTPTPFKNALEKY). Residues 326–343 (PSAGSSSSSNSPVRQTPS) show a composition bias toward low complexity.

In terms of assembly, component of the DREAM complex. As to expression, expressed in hematopoietic and non hematopoietic cells.

It localises to the nucleus. Its function is as follows. Represses v-myb- and c-myb-mediated activation of the mim-1 gene, probably by competing with other myb proteins for binding sites. It is an inhibitory member of the myb family. The sequence is that of Myb-related protein B (MYBL2) from Gallus gallus (Chicken).